A 45-amino-acid polypeptide reads, in one-letter code: Large ribosomal subunit protein bL36 (45 aa).

The protein belongs to the bacterial ribosomal protein bL36 family.

This Aliivibrio salmonicida (strain LFI1238) (Vibrio salmonicida (strain LFI1238)) protein is Large ribosomal subunit protein bL36.